The chain runs to 327 residues: Glycerol-3-phosphate acyltransferase (327 aa).

5 consecutive transmembrane segments (helical) span residues 3–23, 52–72, 78–98, 112–132, and 152–172; these read SLLWLAVAYVMGSIPFGLLFA, VGVLTLVCDALKGAIPVAVAL, TVFHSLTALAALLGHLYSCFL, VFLPLAFWPLVLSGIACLAVI, and MLLLGGHWKLVPLALVVMVLV. Disordered regions lie at residues 184-212 and 233-327; these read SRGEEKPWQKKHHDAAQGTDAGAAPEAAA and PSTE…SSGQ. A compositionally biased stretch (low complexity) spans 199–212; that stretch reads AQGTDAGAAPEAAA. Over residues 237-246 the composition is skewed to polar residues; sequence AAPSQETSDA. Residues 259–271 are compositionally biased toward basic and acidic residues; sequence EGDKRENEEHDNA.

It belongs to the PlsY family. As to quaternary structure, probably interacts with PlsX.

It localises to the cell inner membrane. It carries out the reaction an acyl phosphate + sn-glycerol 3-phosphate = a 1-acyl-sn-glycero-3-phosphate + phosphate. Its pathway is lipid metabolism; phospholipid metabolism. Functionally, catalyzes the transfer of an acyl group from acyl-phosphate (acyl-PO(4)) to glycerol-3-phosphate (G3P) to form lysophosphatidic acid (LPA). This enzyme utilizes acyl-phosphate as fatty acyl donor, but not acyl-CoA or acyl-ACP. The polypeptide is Glycerol-3-phosphate acyltransferase (Nitratidesulfovibrio vulgaris (strain ATCC 29579 / DSM 644 / CCUG 34227 / NCIMB 8303 / VKM B-1760 / Hildenborough) (Desulfovibrio vulgaris)).